A 237-amino-acid chain; its full sequence is Oligoribonuclease, mitochondrial (237 aa).

The N-terminal 25 residues, 1-25 (MLGGSLGSRLLRGVGGSHGRFGARG), are a transit peptide targeting the mitochondrion. The Exonuclease domain occupies 43 to 207 (MVWVDLEMTG…DDISESIKEL (165 aa)). Residues D47 and E49 each coordinate Mg(2+). S92 is modified (phosphoserine). At Y122 the chain carries Phosphotyrosine. Residue D147 coordinates Mg(2+). The residue at position 173 (K173) is an N6-acetyllysine. H194 is an active-site residue. D199 serves as a coordination point for Mg(2+).

The protein belongs to the oligoribonuclease family. In terms of assembly, homodimer. Homotetramer. It depends on Mn(2+) as a cofactor. Mg(2+) serves as cofactor. In terms of tissue distribution, highly expressed in the heart and at lower levels in the lymph nodes, brain, lung, liver, spleen and thymus.

Its subcellular location is the mitochondrion intermembrane space. The protein localises to the mitochondrion matrix. The protein resides in the mitochondrion. It localises to the cytoplasm. It is found in the nucleus. Inhibited by adenosine 3',5'-bisphosphate. 3'-to-5'exoribonuclease that preferentially degrades DNA and RNA oligonucleotides composed of only two nucleotides. Binds and degrades longer oligonucleotides with a lower affinity. Plays dual roles in mitochondria, scavenging nanoRNAs (small RNA oligonucleotides of &lt;5 nucleotides) that are produced by the degradosome and clearing short RNAs that are generated by RNA processing. Essential for correct initiation of mitochondrial transcription, degrading mitochondrial RNA dinucleotides to prevent RNA-primed transcription at non-canonical sites in the mitochondrial genome. Essential for embryonic development. In terms of biological role, 3'-to-5'exoribonuclease that preferentially degrades DNA and RNA oligonucleotides composed of only two nucleotides. The chain is Oligoribonuclease, mitochondrial (REXO2) from Homo sapiens (Human).